The primary structure comprises 519 residues: Cytochrome P450 52A10 (519 aa).

Cysteine 466 is a binding site for heme.

The protein belongs to the cytochrome P450 family. Heme serves as cofactor.

It is found in the membrane. Its function is as follows. Together with an NADPH cytochrome P450 the enzyme system catalyzes the terminal hydroxylation as the first step in the assimilation of alkanes and fatty acids. This is Cytochrome P450 52A10 (CYP52A10) from Candida maltosa (Yeast).